We begin with the raw amino-acid sequence, 364 residues long: Anthranilate phosphoribosyltransferase (364 aa).

5-phospho-alpha-D-ribose 1-diphosphate-binding positions include glycine 101, 104–105, threonine 109, 111–114, 129–137, and glycine 141; these read GD, NLST, and KHGNRAASS. Residue glycine 101 coordinates anthranilate. Mg(2+) is bound at residue serine 113. An anthranilate-binding site is contributed by asparagine 132. Anthranilate is bound at residue arginine 187. Residues aspartate 245 and glutamate 246 each contribute to the Mg(2+) site.

Belongs to the anthranilate phosphoribosyltransferase family. Homodimer. Mg(2+) serves as cofactor.

The enzyme catalyses N-(5-phospho-beta-D-ribosyl)anthranilate + diphosphate = 5-phospho-alpha-D-ribose 1-diphosphate + anthranilate. It functions in the pathway amino-acid biosynthesis; L-tryptophan biosynthesis; L-tryptophan from chorismate: step 2/5. Catalyzes the transfer of the phosphoribosyl group of 5-phosphorylribose-1-pyrophosphate (PRPP) to anthranilate to yield N-(5'-phosphoribosyl)-anthranilate (PRA). The protein is Anthranilate phosphoribosyltransferase of Mycolicibacterium vanbaalenii (strain DSM 7251 / JCM 13017 / BCRC 16820 / KCTC 9966 / NRRL B-24157 / PYR-1) (Mycobacterium vanbaalenii).